The following is a 205-amino-acid chain: ATP phosphoribosyltransferase (205 aa).

The protein belongs to the ATP phosphoribosyltransferase family. Short subfamily. In terms of assembly, heteromultimer composed of HisG and HisZ subunits.

It localises to the cytoplasm. It carries out the reaction 1-(5-phospho-beta-D-ribosyl)-ATP + diphosphate = 5-phospho-alpha-D-ribose 1-diphosphate + ATP. It functions in the pathway amino-acid biosynthesis; L-histidine biosynthesis; L-histidine from 5-phospho-alpha-D-ribose 1-diphosphate: step 1/9. Its function is as follows. Catalyzes the condensation of ATP and 5-phosphoribose 1-diphosphate to form N'-(5'-phosphoribosyl)-ATP (PR-ATP). Has a crucial role in the pathway because the rate of histidine biosynthesis seems to be controlled primarily by regulation of HisG enzymatic activity. The chain is ATP phosphoribosyltransferase from Staphylococcus saprophyticus subsp. saprophyticus (strain ATCC 15305 / DSM 20229 / NCIMB 8711 / NCTC 7292 / S-41).